The chain runs to 400 residues: 3-phenylpropionate/cinnamic acid dioxygenase ferredoxin--NAD(+) reductase component (400 aa).

5 to 36 is an FAD binding site; it reads TIIIVGGGQAAAMAAASLRQQGFTGELHLFSD. Residue 146–174 coordinates NAD(+); it reads SVVIIGAGTIGLELAASATQRRCKVTVIE.

It belongs to the bacterial ring-hydroxylating dioxygenase ferredoxin reductase family. In terms of assembly, this dioxygenase system consists of four proteins: the two subunits of the hydroxylase component (HcaE and HcaF), a ferredoxin (HcaC) and a ferredoxin reductase (HcaD). It depends on FAD as a cofactor.

The catalysed reaction is 2 reduced [2Fe-2S]-[ferredoxin] + NAD(+) + H(+) = 2 oxidized [2Fe-2S]-[ferredoxin] + NADH. It functions in the pathway aromatic compound metabolism; 3-phenylpropanoate degradation. In terms of biological role, part of the multicomponent 3-phenylpropionate dioxygenase, that converts 3-phenylpropionic acid (PP) and cinnamic acid (CI) into 3-phenylpropionate-dihydrodiol (PP-dihydrodiol) and cinnamic acid-dihydrodiol (CI-dihydrodiol), respectively. The sequence is that of 3-phenylpropionate/cinnamic acid dioxygenase ferredoxin--NAD(+) reductase component from Escherichia coli (strain K12 / MC4100 / BW2952).